A 393-amino-acid chain; its full sequence is Formate-dependent phosphoribosylglycinamide formyltransferase (393 aa).

Residues 22–23 and Glu82 each bind N(1)-(5-phospho-beta-D-ribosyl)glycinamide; that span reads EL. ATP is bound by residues Arg114, Lys155, 160–165, 195–198, and Glu203; these read SSGKGQ and EGLV. The ATP-grasp domain occupies 119 to 308; the sequence is RLAAETLQLP…EFALHVRAFL (190 aa). Glu267 and Glu279 together coordinate Mg(2+). N(1)-(5-phospho-beta-D-ribosyl)glycinamide-binding positions include Asp286, Lys355, and 362-363; that span reads RR.

The protein belongs to the PurK/PurT family. As to quaternary structure, homodimer.

It carries out the reaction N(1)-(5-phospho-beta-D-ribosyl)glycinamide + formate + ATP = N(2)-formyl-N(1)-(5-phospho-beta-D-ribosyl)glycinamide + ADP + phosphate + H(+). It functions in the pathway purine metabolism; IMP biosynthesis via de novo pathway; N(2)-formyl-N(1)-(5-phospho-D-ribosyl)glycinamide from N(1)-(5-phospho-D-ribosyl)glycinamide (formate route): step 1/1. Its function is as follows. Involved in the de novo purine biosynthesis. Catalyzes the transfer of formate to 5-phospho-ribosyl-glycinamide (GAR), producing 5-phospho-ribosyl-N-formylglycinamide (FGAR). Formate is provided by PurU via hydrolysis of 10-formyl-tetrahydrofolate. In Yersinia pseudotuberculosis serotype O:3 (strain YPIII), this protein is Formate-dependent phosphoribosylglycinamide formyltransferase.